We begin with the raw amino-acid sequence, 856 residues long: DNA endonuclease RBBP8 (856 aa).

Positions 25 to 48 are essential for binding to the MRN complex and for RPA focus formation on DNA damage; that stretch reads ELWSKLKECHDKDLQELLMKIGKL. Coiled-coil stretches lie at residues 38-87 and 120-141; these read LQEL…EDRL and ITELMNDKNALQDENKRLSEQL. Disordered stretches follow at residues 143 to 174 and 423 to 456; these read DMQKNRHRRKSDEENPADTGDGEDGVIPDSPL and DSEQHKQTGNRYGKRKNAEAEQEESCESSFDKEN. The segment covering 156 to 168 has biased composition (acidic residues); it reads ENPADTGDGEDGV. Residues 493 to 515 are damage-recruitment motif; sequence SSSRTKLTISLVPEKPDTKTILH. Residues 695 to 732 are disordered; sequence SPSQSISCKERSDIPSIENKKITSEKEHESKGEPYQKQ. The segment covering 702–730 has biased composition (basic and acidic residues); sequence CKERSDIPSIENKKITSEKEHESKGEPYQ. Thr-806 carries the phosphothreonine modification. Position 818 is a phosphothreonine; by ATR (Thr-818).

This sequence belongs to the COM1/SAE2/CtIP family. Homotetramer; formed by antiparallel association of helical extensions protruding from the N-termini of two parallel coiled-coil dimers. Interacts with the MRN complex; the interaction links DNA sensing to resection. Interacts with samhd1. In terms of processing, phosphorylation at Thr-818 by atr promotes recruitment to double-strand breaks (DSBs).

The protein localises to the nucleus. Its subcellular location is the chromosome. Its function is as follows. Endonuclease that cooperates with the MRE11-RAD50-NBN (MRN) complex in DNA-end resection, the first step of double-strand break (DSB) repair through the homologous recombination (HR) pathway. Functions downstream of the MRN complex and ATM, promotes ATR activation and its recruitment to DSBs in the S/G2 phase facilitating the generation of ssDNA. Specifically promotes the endonuclease activity of the MRN complex to clear DNA ends containing protein adducts: recruited to DSBs by nbn following phosphorylation, and promotes the endonuclease of mre11 to clear protein-DNA adducts and generate clean double-strand break ends. The MRN complex and rbbp8/CtIP are also required for chromosome alignment during metaphase. The chain is DNA endonuclease RBBP8 (rbbp8) from Xenopus laevis (African clawed frog).